We begin with the raw amino-acid sequence, 434 residues long: Serine hydroxymethyltransferase 1 (434 aa).

Residues L136 and 140 to 142 (GHL) each bind (6S)-5,6,7,8-tetrahydrofolate. K245 bears the N6-(pyridoxal phosphate)lysine mark.

Belongs to the SHMT family. As to quaternary structure, homodimer. Pyridoxal 5'-phosphate is required as a cofactor.

It is found in the cytoplasm. It carries out the reaction (6R)-5,10-methylene-5,6,7,8-tetrahydrofolate + glycine + H2O = (6S)-5,6,7,8-tetrahydrofolate + L-serine. It participates in one-carbon metabolism; tetrahydrofolate interconversion. Its pathway is amino-acid biosynthesis; glycine biosynthesis; glycine from L-serine: step 1/1. Its function is as follows. Catalyzes the reversible interconversion of serine and glycine with tetrahydrofolate (THF) serving as the one-carbon carrier. This reaction serves as the major source of one-carbon groups required for the biosynthesis of purines, thymidylate, methionine, and other important biomolecules. Also exhibits THF-independent aldolase activity toward beta-hydroxyamino acids, producing glycine and aldehydes, via a retro-aldol mechanism. The chain is Serine hydroxymethyltransferase 1 from Rhodospirillum rubrum (strain ATCC 11170 / ATH 1.1.1 / DSM 467 / LMG 4362 / NCIMB 8255 / S1).